The sequence spans 268 residues: Chymotrypsin-C (268 aa).

An N-terminal signal peptide occupies residues 1-16 (MLGITVLAAILACASC). The propeptide at 17–29 (CGNPAFPPNLSTR) is activation peptide. 5 disulfide bridges follow: Cys17–Cys141, Cys59–Cys75, Cys155–Cys222, Cys186–Cys202, and Cys212–Cys243. Asn25 is a glycosylation site (N-linked (GlcNAc...) asparagine). One can recognise a Peptidase S1 domain in the interval 30-267 (VVGGEDAVPN…YNDWINEKIQ (238 aa)). The active-site Charge relay system is the His74. Asn90 is a glycosylation site (N-linked (GlcNAc...) asparagine). Asp121 serves as the catalytic Charge relay system. Catalysis depends on Ser216, which acts as the Charge relay system.

The protein belongs to the peptidase S1 family. Elastase subfamily. As to expression, pancreas.

The enzyme catalyses Preferential cleavage: Leu-|-Xaa, Tyr-|-Xaa, Phe-|-Xaa, Met-|-Xaa, Trp-|-Xaa, Gln-|-Xaa, Asn-|-Xaa.. In terms of biological role, regulates activation and degradation of trypsinogens and procarboxypeptidases by targeting specific cleavage sites within their zymogen precursors. Has chymotrypsin-type protease activity and hypocalcemic activity. Cleaves TRY4 and TRY5 and thereby inhibits their autoactivation. This is Chymotrypsin-C (Ctrc) from Rattus norvegicus (Rat).